Here is a 185-residue protein sequence, read N- to C-terminus: Transcription termination/antitermination protein NusG (185 aa).

Positions 134–163 (VGQQVRIVEGPFATFSGEVEEVMSERNKVR) constitute a KOW domain.

The protein belongs to the NusG family.

Participates in transcription elongation, termination and antitermination. The polypeptide is Transcription termination/antitermination protein NusG (Treponema pallidum (strain Nichols)).